The chain runs to 164 residues: MSDKIGLFTGSFDPMTKGHVDLIERASRLFDKLYVGIFYNREKSGFFTIEARERIVKEALQHLRNVEVITSQNELAVTVARRLGTQAFVRGLRNSQDLDYEANMNFFNQELAGEMETIFLLSKPVYQHISSSRIRELIAFQQDIAAYVPQSVIKELERINDEKN.

Substrate is bound at residue S11. ATP is bound by residues 11 to 12 (SF) and H19. Substrate-binding residues include K43, A76, and R90. ATP contacts are provided by residues 91–93 (GLR), E101, and 126–132 (YQHISSS).

This sequence belongs to the bacterial CoaD family. As to quaternary structure, homohexamer. It depends on Mg(2+) as a cofactor.

The protein resides in the cytoplasm. It catalyses the reaction (R)-4'-phosphopantetheine + ATP + H(+) = 3'-dephospho-CoA + diphosphate. The protein operates within cofactor biosynthesis; coenzyme A biosynthesis; CoA from (R)-pantothenate: step 4/5. Functionally, reversibly transfers an adenylyl group from ATP to 4'-phosphopantetheine, yielding dephospho-CoA (dPCoA) and pyrophosphate. This chain is Phosphopantetheine adenylyltransferase, found in Streptococcus sanguinis (strain SK36).